A 130-amino-acid polypeptide reads, in one-letter code: Small ribosomal subunit protein uS9 (130 aa).

Belongs to the universal ribosomal protein uS9 family.

The chain is Small ribosomal subunit protein uS9 from Xanthomonas campestris pv. campestris (strain 8004).